The sequence spans 386 residues: Succinate--CoA ligase [ADP-forming] subunit beta (386 aa).

The ATP-grasp domain occupies K9 to E244. ATP-binding positions include K46, G53–G55, E99, C102, and E107. N199 and D213 together coordinate Mg(2+). Substrate contacts are provided by residues N264 and G321 to M323.

It belongs to the succinate/malate CoA ligase beta subunit family. Heterotetramer of two alpha and two beta subunits. Requires Mg(2+) as cofactor.

It catalyses the reaction succinate + ATP + CoA = succinyl-CoA + ADP + phosphate. The catalysed reaction is GTP + succinate + CoA = succinyl-CoA + GDP + phosphate. The protein operates within carbohydrate metabolism; tricarboxylic acid cycle; succinate from succinyl-CoA (ligase route): step 1/1. Succinyl-CoA synthetase functions in the citric acid cycle (TCA), coupling the hydrolysis of succinyl-CoA to the synthesis of either ATP or GTP and thus represents the only step of substrate-level phosphorylation in the TCA. The beta subunit provides nucleotide specificity of the enzyme and binds the substrate succinate, while the binding sites for coenzyme A and phosphate are found in the alpha subunit. This chain is Succinate--CoA ligase [ADP-forming] subunit beta, found in Geobacillus kaustophilus (strain HTA426).